Consider the following 98-residue polypeptide: NADH-ubiquinone oxidoreductase chain 4L (98 aa).

3 helical membrane-spanning segments follow: residues 2 to 22 (PSIF…TLVF), 29 to 49 (SLLC…LIIL), and 61 to 81 (ILLL…LVMV).

It belongs to the complex I subunit 4L family. In terms of assembly, core subunit of respiratory chain NADH dehydrogenase (Complex I) which is composed of 45 different subunits.

It is found in the mitochondrion inner membrane. It carries out the reaction a ubiquinone + NADH + 5 H(+)(in) = a ubiquinol + NAD(+) + 4 H(+)(out). Functionally, core subunit of the mitochondrial membrane respiratory chain NADH dehydrogenase (Complex I) which catalyzes electron transfer from NADH through the respiratory chain, using ubiquinone as an electron acceptor. Part of the enzyme membrane arm which is embedded in the lipid bilayer and involved in proton translocation. The chain is NADH-ubiquinone oxidoreductase chain 4L (MT-ND4L) from Avahi laniger (Eastern woolly lemur).